Reading from the N-terminus, the 215-residue chain is Pyrrolidone-carboxylate peptidase (215 aa).

Residues Glu81, Cys144, and His168 contribute to the active site.

The protein belongs to the peptidase C15 family. In terms of assembly, homotetramer.

It is found in the cytoplasm. The enzyme catalyses Release of an N-terminal pyroglutamyl group from a polypeptide, the second amino acid generally not being Pro.. Functionally, removes 5-oxoproline from various penultimate amino acid residues except L-proline. The polypeptide is Pyrrolidone-carboxylate peptidase (pcp) (Bacillus amyloliquefaciens (Bacillus velezensis)).